The chain runs to 194 residues: NADH-quinone oxidoreductase subunit B (194 aa).

[4Fe-4S] cluster-binding residues include Cys-72, Cys-73, Cys-137, and Cys-167.

This sequence belongs to the complex I 20 kDa subunit family. NDH-1 is composed of 14 different subunits. Subunits NuoB, C, D, E, F, and G constitute the peripheral sector of the complex. Requires [4Fe-4S] cluster as cofactor.

It localises to the cell inner membrane. The enzyme catalyses a quinone + NADH + 5 H(+)(in) = a quinol + NAD(+) + 4 H(+)(out). Its function is as follows. NDH-1 shuttles electrons from NADH, via FMN and iron-sulfur (Fe-S) centers, to quinones in the respiratory chain. Couples the redox reaction to proton translocation (for every two electrons transferred, four hydrogen ions are translocated across the cytoplasmic membrane), and thus conserves the redox energy in a proton gradient. The protein is NADH-quinone oxidoreductase subunit B of Granulibacter bethesdensis (strain ATCC BAA-1260 / CGDNIH1).